We begin with the raw amino-acid sequence, 527 residues long: Putative BTB/POZ domain and WD-repeat protein R783 (527 aa).

One can recognise a BTB domain in the interval 45-115 (TDVTIVLDDG…FYSQNTDTRN (71 aa)). 5 WD repeats span residues 215–266 (IHGD…VEAS), 272–310 (NVKT…LIKT), 313–353 (KHKN…IVRC), 355–391 (ISPV…FLFK), and 436–476 (YCPS…DNKY).

The protein belongs to the mimivirus BTB/WD family.

The chain is Putative BTB/POZ domain and WD-repeat protein R783 from Acanthamoeba polyphaga (Amoeba).